We begin with the raw amino-acid sequence, 326 residues long: Phospholipid scramblase 4 (326 aa).

The segment at 1-32 (MSGLVPTAPEQPTEEMENQIKSPTAVPDAPPD) is disordered. A proline-rich domain (PRD) region spans residues 1–94 (MSGLVPTAPE…PVTNQPAPIM (94 aa)). Over 1 to 299 (MSGLVPTAPE…IRFPLALDVK (299 aa)) the chain is Cytoplasmic. Positions 18 to 25 (NQIKSPTA) match the SH3-binding 1 motif. The short motif at 30 to 33 (PPDY) is the PPxY motif element. The SH3-binding 2 signature appears at 41–49 (PAGPVASPS). Y79 and Y84 each carry phosphotyrosine; by ABL. Residues 94-102 (MWMAGPAPV) carry the SH3-binding 3 motif. S-palmitoyl cysteine attachment occurs at residues C193, C194, C195, C197, and C198. Residues 300–316 (MKAMIFGSCFLIDFMYF) form a helical membrane-spanning segment. Over 317-326 (ERPPPRRMSR) the chain is Extracellular.

It belongs to the phospholipid scramblase family. Interacts with PDCD6. Interacts with KPNA2; this interaction mediates the nucleus import of PLSCR4. The cofactor is Ca(2+). Mg(2+) is required as a cofactor. Zn(2+) serves as cofactor.

Its subcellular location is the cell membrane. It is found in the nucleus. It carries out the reaction a 1,2-diacyl-sn-glycero-3-phosphocholine(in) = a 1,2-diacyl-sn-glycero-3-phosphocholine(out). The catalysed reaction is a 1,2-diacyl-sn-glycero-3-phospho-L-serine(in) = a 1,2-diacyl-sn-glycero-3-phospho-L-serine(out). Catalyzes metal ion-induced ATP-independent rapid bidirectional and non-specific movement of phospholipids (lipid scrambling or lipid flip-flop) between the inner and outer leaflet of the plasma membrane and participates in the redistribution of phospholipids between membrane leaflets. Metal ions bind to the calcium-binding site and induce conformation change in the protein. Has a greater affi nity for Ca(2+) than Mg(2+) and Zn(2+). This is Phospholipid scramblase 4 from Mus musculus (Mouse).